The following is a 119-amino-acid chain: Ghilanten (119 aa).

Q1 carries the post-translational modification Pyrrolidone carboxylic acid. Intrachain disulfides connect C8–C19, C13–C26, C28–C48, C33–C51, C37–C53, C62–C73, C67–C80, C82–C103, C88–C106, and C92–C108. The Antistasin-like 1 domain maps to 28–53 (CPEVRCRVYCSHGFQRSRYGCEVCRC). The 26-residue stretch at 83–108 (KIDINCRKTCPNGLKRDKLGCEYCEC) folds into the Antistasin-like 2 domain. Heparin contacts are provided by residues 97-100 (KRDK) and 111-118 (KRKLVPRL).

The protein belongs to the protease inhibitor I15 (antistasin) family.

It is found in the secreted. Functionally, this highly disulfide-bonded protein is a potent inhibitor of factor Xa. May have therapeutic utility as an anticoagulant. Also exhibits a strong metastatic activity. This chain is Ghilanten, found in Haementeria ghilianii (Amazon leech).